Consider the following 147-residue polypeptide: NADH-quinone oxidoreductase subunit A (147 aa).

Transmembrane regions (helical) follow at residues 16–36, 68–88, and 98–118; these read FAIF…GGWF, FYLV…LFAW, and VGFV…VYLV.

This sequence belongs to the complex I subunit 3 family. NDH-1 is composed of 13 different subunits. Subunits NuoA, H, J, K, L, M, N constitute the membrane sector of the complex.

The protein localises to the cell inner membrane. It carries out the reaction a quinone + NADH + 5 H(+)(in) = a quinol + NAD(+) + 4 H(+)(out). In terms of biological role, NDH-1 shuttles electrons from NADH, via FMN and iron-sulfur (Fe-S) centers, to quinones in the respiratory chain. The immediate electron acceptor for the enzyme in this species is believed to be ubiquinone. Couples the redox reaction to proton translocation (for every two electrons transferred, four hydrogen ions are translocated across the cytoplasmic membrane), and thus conserves the redox energy in a proton gradient. The chain is NADH-quinone oxidoreductase subunit A from Shigella boydii serotype 18 (strain CDC 3083-94 / BS512).